A 105-amino-acid polypeptide reads, in one-letter code: Large ribosomal subunit protein uL24 (105 aa).

This sequence belongs to the universal ribosomal protein uL24 family. Part of the 50S ribosomal subunit.

Its function is as follows. One of two assembly initiator proteins, it binds directly to the 5'-end of the 23S rRNA, where it nucleates assembly of the 50S subunit. One of the proteins that surrounds the polypeptide exit tunnel on the outside of the subunit. The protein is Large ribosomal subunit protein uL24 of Vibrio campbellii (strain ATCC BAA-1116).